Reading from the N-terminus, the 322-residue chain is Phosphatidylserine decarboxylase proenzyme (322 aa).

Active-site charge relay system; for autoendoproteolytic cleavage activity residues include Asp-90, His-147, and Ser-254. The active-site Schiff-base intermediate with substrate; via pyruvic acid; for decarboxylase activity is the Ser-254. Ser-254 carries the post-translational modification Pyruvic acid (Ser); by autocatalysis. The disordered stretch occupies residues 295-322 (VEPAPLPTEEIKAEHDASPLVDNKKDDT). The span at 303–322 (EEIKAEHDASPLVDNKKDDT) shows a compositional bias: basic and acidic residues.

This sequence belongs to the phosphatidylserine decarboxylase family. PSD-B subfamily. Prokaryotic type I sub-subfamily. Heterodimer of a large membrane-associated beta subunit and a small pyruvoyl-containing alpha subunit. The cofactor is pyruvate. In terms of processing, is synthesized initially as an inactive proenzyme. Formation of the active enzyme involves a self-maturation process in which the active site pyruvoyl group is generated from an internal serine residue via an autocatalytic post-translational modification. Two non-identical subunits are generated from the proenzyme in this reaction, and the pyruvate is formed at the N-terminus of the alpha chain, which is derived from the carboxyl end of the proenzyme. The autoendoproteolytic cleavage occurs by a canonical serine protease mechanism, in which the side chain hydroxyl group of the serine supplies its oxygen atom to form the C-terminus of the beta chain, while the remainder of the serine residue undergoes an oxidative deamination to produce ammonia and the pyruvoyl prosthetic group on the alpha chain. During this reaction, the Ser that is part of the protease active site of the proenzyme becomes the pyruvoyl prosthetic group, which constitutes an essential element of the active site of the mature decarboxylase.

Its subcellular location is the cell membrane. The catalysed reaction is a 1,2-diacyl-sn-glycero-3-phospho-L-serine + H(+) = a 1,2-diacyl-sn-glycero-3-phosphoethanolamine + CO2. It functions in the pathway phospholipid metabolism; phosphatidylethanolamine biosynthesis; phosphatidylethanolamine from CDP-diacylglycerol: step 2/2. Its function is as follows. Catalyzes the formation of phosphatidylethanolamine (PtdEtn) from phosphatidylserine (PtdSer). The sequence is that of Phosphatidylserine decarboxylase proenzyme from Salmonella agona (strain SL483).